We begin with the raw amino-acid sequence, 338 residues long: Ketoreductase azaE (338 aa).

The NADP(+) site is built by Lys-41 and Tyr-166.

It belongs to the NAD(P)-dependent epimerase/dehydratase family. Dihydroflavonol-4-reductase subfamily.

It functions in the pathway secondary metabolite biosynthesis. Functionally, ketoreductase; part of the gene cluster that mediates the biosynthesis of azaphilones, a class of fungal metabolites characterized by a highly oxygenated pyrano-quinone bicyclic core and exhibiting a broad range of bioactivities. In the first step, the non-reducing polyketide synthase azaA forms the hexaketide precursor from successive condensations of five malonyl-CoA units, presumably with a simple acetyl-CoA starter unit. The reactive polyketide chain then undergoes a PT-mediated C2-C7 cyclization to afford the aromatic ring and is eventually released as an aldehyde through the R-domain. The putative ketoreductase azaE is proposed to catalyze the reduction of the terminal ketone resulting in the early culture product FK17-P2a. The monooxygenase azaH was demonstrated to be the only enzyme required to convert FK17-P2a to azanigerone E. AzaH first hydroxylates the benzaldehyde intermediate FK17-P2a at C4, which triggers the formation of the pyran-ring to afford azanigerone E. In parallel, the 2,4-dimethylhexanoyl chain is synthesized by the HR-PKS azaB and is proposed to be transferred to the C4-hydroxyl of azanigerone E by the acyltransferase azaD directly from the ACP domain of azaB. Alternatively, the 2,4-dimethyl-hexanoyl chain may be offloaded from the HR-PKS as a carboxylic acid and converted to an acyl-CoA by azaF. The resulting acyl-CoA molecule could then be taken up as a substrate by AzaD to form azanigerone B. To yield the carboxylic acid substituent in azanigerone A, the hydroxypropyl side chain of azanigerone B would need to undergo a C-C oxidative cleavage catalyzed by cytochrome P450 AzaI. AzaI is proposed to act on a vicinal diol that leads to a C-C bond scission either through an alkoxyradical intermediate or a peroxy complex. In the biosynthesis of azanigerone A, azanigerone B first undergoes hydroxylation at C10, possibly catalyzed by one of the two FAD-dependent monooxygenases encoded in the cluster, azaG or azaL, resulting in the vicinal diol azanigerone C. Oxidative cleavage of azanigerone C by azaI would yield the corresponding aldehyde derivative of azanigerone A. Finally, the dehydrogenase azaJ is proposed to convert the aldehyde functional group into the carboxylic acid, completing the conversion from azanigerone B to azanigerone A. Alternatively, the oxidation of aldehyde to carboxylic acid may be catalyzed by the same P450 enzyme azaI via consecutive oxidation or by endogenous alcohol dehydrogenase. This chain is Ketoreductase azaE, found in Aspergillus niger (strain ATCC 1015 / CBS 113.46 / FGSC A1144 / LSHB Ac4 / NCTC 3858a / NRRL 328 / USDA 3528.7).